Reading from the N-terminus, the 286-residue chain is Thymidylate synthase (286 aa).

DUMP is bound at residue 140-141; it reads RR. C161 serves as the catalytic Nucleophile. DUMP is bound by residues 185 to 188, N196, and 226 to 228; these read RSND and HIY. Position 188 (D188) interacts with (6R)-5,10-methylene-5,6,7,8-tetrahydrofolate. A285 lines the (6R)-5,10-methylene-5,6,7,8-tetrahydrofolate pocket.

Belongs to the thymidylate synthase family. Bacterial-type ThyA subfamily. In terms of assembly, homodimer.

The protein resides in the cytoplasm. The enzyme catalyses dUMP + (6R)-5,10-methylene-5,6,7,8-tetrahydrofolate = 7,8-dihydrofolate + dTMP. The protein operates within pyrimidine metabolism; dTTP biosynthesis. Functionally, catalyzes the reductive methylation of 2'-deoxyuridine-5'-monophosphate (dUMP) to 2'-deoxythymidine-5'-monophosphate (dTMP) while utilizing 5,10-methylenetetrahydrofolate (mTHF) as the methyl donor and reductant in the reaction, yielding dihydrofolate (DHF) as a by-product. This enzymatic reaction provides an intracellular de novo source of dTMP, an essential precursor for DNA biosynthesis. The chain is Thymidylate synthase from Streptococcus thermophilus (strain ATCC BAA-491 / LMD-9).